The primary structure comprises 550 residues: Crystal protein (550 aa).

Positions 1-19 are cleaved as a signal peptide; it reads MNKIIILLIILLSFDIISA. The cysteines at positions 91 and 111 are disulfide-linked. Asn-156 carries N-linked (GlcNAc...) asparagine glycosylation. Ser-215 functions as the Acyl-ester intermediate in the catalytic mechanism. A disulfide bond links Cys-267 and Cys-274. Residues Glu-340 and His-443 each act as charge relay system in the active site. Asn-506 carries N-linked (GlcNAc...) asparagine glycosylation.

This sequence belongs to the type-B carboxylesterase/lipase family.

The protein resides in the cytoplasmic vesicle. The protein localises to the esterosome membrane. The chain is Crystal protein (cryS) from Dictyostelium discoideum (Social amoeba).